A 77-amino-acid polypeptide reads, in one-letter code: Putative defensin-like protein 129 (77 aa).

The signal sequence occupies residues 1-25 (MTKNTALTIFMVVLVIEMVMEETQG). Cystine bridges form between C28–C77, C37–C59, C42–C71, and C46–C73.

It belongs to the DEFL family.

The protein localises to the secreted. The sequence is that of Putative defensin-like protein 129 (LCR13) from Arabidopsis thaliana (Mouse-ear cress).